We begin with the raw amino-acid sequence, 170 residues long: ATP synthase subunit b (170 aa).

Residues 11–31 traverse the membrane as a helical segment; sequence AFTFGDAFFTLFAFAILLVLI.

Belongs to the ATPase B chain family. As to quaternary structure, F-type ATPases have 2 components, F(1) - the catalytic core - and F(0) - the membrane proton channel. F(1) has five subunits: alpha(3), beta(3), gamma(1), delta(1), epsilon(1). F(0) has three main subunits: a(1), b(2) and c(10-14). The alpha and beta chains form an alternating ring which encloses part of the gamma chain. F(1) is attached to F(0) by a central stalk formed by the gamma and epsilon chains, while a peripheral stalk is formed by the delta and b chains.

The protein resides in the cell membrane. Functionally, f(1)F(0) ATP synthase produces ATP from ADP in the presence of a proton or sodium gradient. F-type ATPases consist of two structural domains, F(1) containing the extramembraneous catalytic core and F(0) containing the membrane proton channel, linked together by a central stalk and a peripheral stalk. During catalysis, ATP synthesis in the catalytic domain of F(1) is coupled via a rotary mechanism of the central stalk subunits to proton translocation. Component of the F(0) channel, it forms part of the peripheral stalk, linking F(1) to F(0). The chain is ATP synthase subunit b from Listeria welshimeri serovar 6b (strain ATCC 35897 / DSM 20650 / CCUG 15529 / CIP 8149 / NCTC 11857 / SLCC 5334 / V8).